The chain runs to 258 residues: Acetylglutamate kinase (258 aa).

Substrate contacts are provided by residues 44–45 (GG), R66, and N158. Residues 181–186 (DVSGIL) and 209–211 (IIT) each bind ATP.

The protein belongs to the acetylglutamate kinase family. ArgB subfamily. As to quaternary structure, homodimer.

It is found in the cytoplasm. The catalysed reaction is N-acetyl-L-glutamate + ATP = N-acetyl-L-glutamyl 5-phosphate + ADP. The protein operates within amino-acid biosynthesis; L-arginine biosynthesis; N(2)-acetyl-L-ornithine from L-glutamate: step 2/4. Functionally, catalyzes the ATP-dependent phosphorylation of N-acetyl-L-glutamate. The sequence is that of Acetylglutamate kinase from Klebsiella pneumoniae subsp. pneumoniae (strain ATCC 700721 / MGH 78578).